Here is a 415-residue protein sequence, read N- to C-terminus: Queuine tRNA-ribosyltransferase accessory subunit 2 (415 aa).

Zn(2+) is bound by residues cysteine 351, cysteine 353, cysteine 356, and histidine 382.

The protein belongs to the queuine tRNA-ribosyltransferase family. QTRT2 subfamily. Heterodimer of a catalytic subunit qtrt1 and an accessory subunit qtrt2. It depends on Zn(2+) as a cofactor.

Its subcellular location is the cytoplasm. The protein localises to the mitochondrion outer membrane. Non-catalytic subunit of the queuine tRNA-ribosyltransferase (TGT) that catalyzes the base-exchange of a guanine (G) residue with queuine (Q) at position 34 (anticodon wobble position) in tRNAs with GU(N) anticodons (tRNA-Asp, -Asn, -His and -Tyr), resulting in the hypermodified nucleoside queuosine (7-(((4,5-cis-dihydroxy-2-cyclopenten-1-yl)amino)methyl)-7-deazaguanosine). The protein is Queuine tRNA-ribosyltransferase accessory subunit 2 of Xenopus laevis (African clawed frog).